A 795-amino-acid polypeptide reads, in one-letter code: Phenylalanine--tRNA ligase beta subunit (795 aa).

Residues 39–148 enclose the tRNA-binding domain; it reads AGTFNGVVVG…LDAPIGTDLR (110 aa). The 76-residue stretch at 401-476 folds into the B5 domain; sequence PKVNTVQLRR…RIYGYNSIPN (76 aa). Positions 454, 460, 463, and 464 each coordinate Mg(2+). One can recognise an FDX-ACB domain in the interval 701 to 794; sequence SKFPANRRDL…VKQRFNAELR (94 aa).

It belongs to the phenylalanyl-tRNA synthetase beta subunit family. Type 1 subfamily. Tetramer of two alpha and two beta subunits. The cofactor is Mg(2+).

It localises to the cytoplasm. The enzyme catalyses tRNA(Phe) + L-phenylalanine + ATP = L-phenylalanyl-tRNA(Phe) + AMP + diphosphate + H(+). The protein is Phenylalanine--tRNA ligase beta subunit of Haemophilus influenzae (strain 86-028NP).